The following is a 133-amino-acid chain: Small ribosomal subunit protein uS8 (133 aa).

Belongs to the universal ribosomal protein uS8 family. In terms of assembly, part of the 30S ribosomal subunit. Contacts proteins S5 and S12.

In terms of biological role, one of the primary rRNA binding proteins, it binds directly to 16S rRNA central domain where it helps coordinate assembly of the platform of the 30S subunit. This chain is Small ribosomal subunit protein uS8, found in Trichodesmium erythraeum (strain IMS101).